Consider the following 199-residue polypeptide: Large ribosomal subunit protein mL51 (199 aa).

A mitochondrion-targeting transit peptide spans 1-15 (MNSNSLSRFTSIVRT).

It belongs to the mitochondrion-specific ribosomal protein mL51 family. Component of the mitochondrial ribosome large subunit (39S) which comprises a 16S rRNA and about 50 distinct proteins.

The protein localises to the mitochondrion. The protein is Large ribosomal subunit protein mL51 (mrpl-51) of Caenorhabditis elegans.